A 688-amino-acid polypeptide reads, in one-letter code: UvrABC system protein B (688 aa).

In terms of domain architecture, Helicase ATP-binding spans glycine 31 to glutamine 414. An ATP-binding site is contributed by glycine 44 to serine 51. The short motif at tyrosine 97–isoleucine 120 is the Beta-hairpin element. A Helicase C-terminal domain is found at glutamine 434 to threonine 600. The segment at leucine 614–isoleucine 633 is disordered. The 36-residue stretch at glutamate 642 to aspartate 677 folds into the UVR domain.

The protein belongs to the UvrB family. As to quaternary structure, forms a heterotetramer with UvrA during the search for lesions. Interacts with UvrC in an incision complex.

The protein resides in the cytoplasm. Its function is as follows. The UvrABC repair system catalyzes the recognition and processing of DNA lesions. A damage recognition complex composed of 2 UvrA and 2 UvrB subunits scans DNA for abnormalities. Upon binding of the UvrA(2)B(2) complex to a putative damaged site, the DNA wraps around one UvrB monomer. DNA wrap is dependent on ATP binding by UvrB and probably causes local melting of the DNA helix, facilitating insertion of UvrB beta-hairpin between the DNA strands. Then UvrB probes one DNA strand for the presence of a lesion. If a lesion is found the UvrA subunits dissociate and the UvrB-DNA preincision complex is formed. This complex is subsequently bound by UvrC and the second UvrB is released. If no lesion is found, the DNA wraps around the other UvrB subunit that will check the other stand for damage. This chain is UvrABC system protein B, found in Leifsonia xyli subsp. xyli (strain CTCB07).